A 236-amino-acid polypeptide reads, in one-letter code: E3 ubiquitin-protein ligase ATL41 (236 aa).

A helical membrane pass occupies residues 31–51 (IMLAAVASLSGVILIVFALHL). An RING-type; atypical zinc finger spans residues 108-150 (CAVCLSVLKEQDKARELPNCKHIFHVDCVDTWLTTCSTCPVCR).

It belongs to the RING-type zinc finger family. ATL subfamily.

It is found in the membrane. It catalyses the reaction S-ubiquitinyl-[E2 ubiquitin-conjugating enzyme]-L-cysteine + [acceptor protein]-L-lysine = [E2 ubiquitin-conjugating enzyme]-L-cysteine + N(6)-ubiquitinyl-[acceptor protein]-L-lysine.. The protein operates within protein modification; protein ubiquitination. Its function is as follows. E3 ubiquitin-protein ligase able to catalyze polyubiquitination with ubiquitin-conjugating enzyme E2 UBC8, UBC10, UBC11, UBC28, UBC29, UBC30, UBC35 and UBC36 in vitro. The chain is E3 ubiquitin-protein ligase ATL41 (ATL41) from Arabidopsis thaliana (Mouse-ear cress).